A 236-amino-acid chain; its full sequence is Ubiquinone biosynthesis O-methyltransferase (236 aa).

Residues R39, G59, D80, and M124 each contribute to the S-adenosyl-L-methionine site.

The protein belongs to the methyltransferase superfamily. UbiG/COQ3 family.

The catalysed reaction is a 3-demethylubiquinol + S-adenosyl-L-methionine = a ubiquinol + S-adenosyl-L-homocysteine + H(+). It carries out the reaction a 3-(all-trans-polyprenyl)benzene-1,2-diol + S-adenosyl-L-methionine = a 2-methoxy-6-(all-trans-polyprenyl)phenol + S-adenosyl-L-homocysteine + H(+). It functions in the pathway cofactor biosynthesis; ubiquinone biosynthesis. O-methyltransferase that catalyzes the 2 O-methylation steps in the ubiquinone biosynthetic pathway. This is Ubiquinone biosynthesis O-methyltransferase from Shewanella sp. (strain MR-7).